Consider the following 279-residue polypeptide: 32 kDa beta-galactoside-binding lectin (279 aa).

Galectin domains lie at 13-144 (YRSV…VHWG) and 152-279 (YESG…IQIQ). Residue 213–219 (WGNEERE) participates in a beta-D-galactoside binding.

The N-terminus is blocked.

Binds galactose. This chain is 32 kDa beta-galactoside-binding lectin (lec-1), found in Caenorhabditis elegans.